We begin with the raw amino-acid sequence, 1175 residues long: Beta-agarase AgaO (1175 aa).

The signal sequence occupies residues 1–29; that stretch reads MRLSKSQGILPLAHAVLAAAIAYSTAATA. The CBM6 1 domain maps to 32-164; the sequence is YRLEAEDFTN…QWNLDKMELA (133 aa). Residues 169 to 208 are disordered; that stretch reads SSSSSGGGSTSSSSSGGSSSSSGSGSSSSGGSPEEGGHVS. Low complexity predominate over residues 178–200; that stretch reads TSSSSSGGSSSSSGSGSSSSGGS. Positions 211–339 constitute a CBM6 2 domain; that stretch reads FKLEAESAHH…QFNIDYVIFE (129 aa). Positions 355–481 are disordered; it reads IADVNDSCPG…ESGCSPSQVA (127 aa). Residues 382 to 393 are compositionally biased toward basic and acidic residues; that stretch reads DTDKDGIADNRD. Over residues 471–481 the composition is skewed to polar residues; that stretch reads NESGCSPSQVA. Catalysis depends on E661, which acts as the Proton donor. The active-site Nucleophile is the E832.

Belongs to the glycosyl hydrolase 86 family.

It carries out the reaction Hydrolysis of (1-&gt;4)-beta-D-galactosidic linkages in agarose, giving the tetramer as the predominant product.. Its activity is regulated as follows. Activity and stability are strongly enhanced by CaCl(2). Activity is not affected by sulfhydryl inhibitors such as iodoacetoamide and p-chloromercuribenzoate or by thiol reagents such as dithiothreitol and 2-mercaptoethanol. Strongly inhibited by N-bromosuccinimide and sodium dodecyl sulfate. Functionally, endo-type beta-agarase, which degrades agarose and agarose oligosaccharides more polymerized than hexamers to yield neoagarohexaose (NA6) as the main product, with lesser amounts of neoagarotetraose (NA4) and neoagarobiose (NA2). This is Beta-agarase AgaO from Microbulbifer thermotolerans.